The primary structure comprises 561 residues: Lysine--tRNA ligase (561 aa).

Positions 409 and 416 each coordinate Mg(2+).

Belongs to the class-II aminoacyl-tRNA synthetase family. In terms of assembly, homodimer. The cofactor is Mg(2+).

It is found in the cytoplasm. The catalysed reaction is tRNA(Lys) + L-lysine + ATP = L-lysyl-tRNA(Lys) + AMP + diphosphate. This chain is Lysine--tRNA ligase, found in Nostoc punctiforme (strain ATCC 29133 / PCC 73102).